The following is a 469-amino-acid chain: E3 ubiquitin-protein ligase pellino homolog 3 (469 aa).

A disordered region spans residues Met1–Glu39. Position 11 is a phosphoserine (Ser11).

This sequence belongs to the pellino family. Interacts with TRAF6, MAP3K14 and MAP3K7. Post-translationally, phosphorylated by IRAK1 enhancing its E3 ligase activity. Highly expressed in brain, heart and testis, and at lower level in kidney, liver, lung, placenta, small intestine, spleen and stomach. Isoform 1 is not expressed in lung.

It carries out the reaction S-ubiquitinyl-[E2 ubiquitin-conjugating enzyme]-L-cysteine + [acceptor protein]-L-lysine = [E2 ubiquitin-conjugating enzyme]-L-cysteine + N(6)-ubiquitinyl-[acceptor protein]-L-lysine.. The protein operates within protein modification; protein ubiquitination. E3 ubiquitin ligase catalyzing the covalent attachment of ubiquitin moieties onto substrate proteins. Involved in the TLR and IL-1 signaling pathways via interaction with the complex containing IRAK kinases and TRAF6. Mediates 'Lys-63'-linked polyubiquitination of IRAK1. Can activate AP1/JUN and ELK1. Acts as a regulator of innate immunity by mediating 'Lys-63'-linked polyubiquitination of RIPK2 downstream of NOD1 and NOD2, thereby transforming RIPK2 into a scaffolding protein for downstream effectors, ultimately leading to activation of the NF-kappa-B and MAP kinases signaling. Catalyzes 'Lys-63'-linked polyubiquitination of RIPK2 in parallel of XIAP. In Homo sapiens (Human), this protein is E3 ubiquitin-protein ligase pellino homolog 3.